A 192-amino-acid polypeptide reads, in one-letter code: ATP-dependent Clp protease proteolytic subunit 1 (192 aa).

S92 acts as the Nucleophile in catalysis. Residue H117 is part of the active site.

Belongs to the peptidase S14 family. Fourteen ClpP subunits assemble into 2 heptameric rings which stack back to back to give a disk-like structure with a central cavity, resembling the structure of eukaryotic proteasomes.

Its subcellular location is the cytoplasm. The catalysed reaction is Hydrolysis of proteins to small peptides in the presence of ATP and magnesium. alpha-casein is the usual test substrate. In the absence of ATP, only oligopeptides shorter than five residues are hydrolyzed (such as succinyl-Leu-Tyr-|-NHMec, and Leu-Tyr-Leu-|-Tyr-Trp, in which cleavage of the -Tyr-|-Leu- and -Tyr-|-Trp bonds also occurs).. Its function is as follows. Cleaves peptides in various proteins in a process that requires ATP hydrolysis. Has a chymotrypsin-like activity. Plays a major role in the degradation of misfolded proteins. In Chlamydia muridarum (strain MoPn / Nigg), this protein is ATP-dependent Clp protease proteolytic subunit 1.